The primary structure comprises 1123 residues: Telomerase reverse transcriptase (1123 aa).

Positions 1–230 (MPRAPRCRAV…ARRRRGSPGS (230 aa)) are RNA-interacting domain 1. The GQ motif stretch occupies residues 58–197 (VPWGARPPPA…APGLPGLPGL (140 aa)). The segment at 137-141 (WGLLL) is required for regulating specificity for telomeric DNA and for processivity for primer elongation. The segment at 202-311 (AGAGASADLR…GVPHDPAHPE (110 aa)) is disordered. The Bipartite nuclear localization signal signature appears at 222 to 240 (RRRRGSPGSGVPLAKRPRR). Ser227 carries the post-translational modification Phosphoserine; by PKB/AKT1. Residues 231-308 (GVPLAKRPRR…GPQGVPHDPA (78 aa)) form a linker region. Low complexity predominate over residues 260–279 (PPVSEAPAVTPAVAASPAAS). The tract at residues 309 to 539 (HPETKRFLYC…LARFLVLVDG (231 aa)) is RNA-interacting domain 2. The short motif at 312-317 (TKRFLY) is the TFLY; involved in RNA binding element. The segment at 360–510 (ARRMRRLPAR…MKVRDCTWLH (151 aa)) is QFP motif. A CP motif region spans residues 381–401 (LGNHARCPYRALLRTHCPLRA). Position 446 is a phosphoserine; by DYRK2 (Ser446). The 332-residue stretch at 595–926 (EVRRHREARP…CLFPWCGLLL (332 aa)) folds into the Reverse transcriptase domain. Tyr697 is subject to Phosphotyrosine; by SRC-type Tyr-kinases. Residues Asp702, Asp859, and Asp860 each contribute to the Mg(2+) site. Residues 905–919 (LGSAAPLQLPAHCLF) are required for oligomerization. The segment at 921 to 925 (WCGLL) is primer grip sequence. The segment at 927–1123 (DTRTLEVSCD…LTADFKTILD (197 aa)) is CTE.

The protein belongs to the reverse transcriptase family. Telomerase subfamily. As to quaternary structure, catalytic component of the telomerase holoenzyme complex composed of one molecule of TERT, one molecule of WRAP53/TCAB1, two molecules of H/ACA ribonucleoprotein complex subunits DKC1, NOP10, NHP2 and GAR1, and a telomerase RNA template component (TERC). The telomerase holoenzyme complex is associated with TEP1, SMG6/EST1A and POT1. The molecular chaperone HSP90/P23 complex is required for correct assembly and stabilization of the active telomerase. Interacts directly with HSP90A and PTGES3. Interacts with HSPA1A; the interaction occurs in the absence of TERC and dissociates once the complex has formed. Interacts with RAN; the interaction promotes nuclear export of TERT. Interacts with XPO1. Interacts with PTPN11; the interaction retains TERT in the nucleus. Interacts with NCL (via RRM1 and C-terminal RRM4/Arg/Gly-rich domains); the interaction is important for nucleolar localization of TERT. Interacts with SMARCA4 (via the bromodomain); the interaction regulates Wnt-mediated signaling. Interacts with MCRS1 (isoform MCRS2); the interaction inhibits in vitro telomerase activity. Interacts with PIF1; the interaction has no effect on the elongation activity of TERT. Interacts with PML; the interaction recruits TERT to PML bodies and inhibits telomerase activity. Interacts with GNL3L. Interacts with isoform 1 and isoform 2 of NVL. Interacts with DHX36. Interacts with ATF7. In terms of processing, phosphorylation at Tyr-697 under oxidative stress leads to translocation of TERT to the cytoplasm and reduces its antiapoptotic activity. Dephosphorylated by SHP2/PTPN11 leading to nuclear retention. Phosphorylation at Ser-227 by the AKT pathway promotes nuclear location. Phosphorylation at the G2/M phase at Ser-446 by DYRK2 promotes ubiquitination by the EDVP complex and degradation. Post-translationally, ubiquitinated by the EDVP complex, a E3 ligase complex following phosphorylation at Ser-446 by DYRK2. Ubiquitinated leads to proteasomal degradation.

It localises to the nucleus. The protein localises to the nucleolus. The protein resides in the nucleoplasm. It is found in the chromosome. Its subcellular location is the telomere. It localises to the cytoplasm. The protein localises to the PML body. It catalyses the reaction DNA(n) + a 2'-deoxyribonucleoside 5'-triphosphate = DNA(n+1) + diphosphate. Functionally, telomerase is a ribonucleoprotein enzyme essential for the replication of chromosome termini in most eukaryotes. Active in progenitor and cancer cells. Inactive, or very low activity, in normal somatic cells. Catalytic component of the teleromerase holoenzyme complex whose main activity is the elongation of telomeres by acting as a reverse transcriptase that adds simple sequence repeats to chromosome ends by copying a template sequence within the RNA component of the enzyme. Catalyzes the RNA-dependent extension of 3'-chromosomal termini with the 6-nucleotide telomeric repeat unit, 5'-TTAGGG-3'. The catalytic cycle involves primer binding, primer extension and release of product once the template boundary has been reached or nascent product translocation followed by further extension. More active on substrates containing 2 or 3 telomeric repeats. Telomerase activity is regulated by a number of factors including telomerase complex-associated proteins, chaperones and polypeptide modifiers. Modulates Wnt signaling. Plays important roles in aging and antiapoptosis. This chain is Telomerase reverse transcriptase (TERT), found in Canis lupus familiaris (Dog).